The sequence spans 402 residues: NADH dehydrogenase [ubiquinone] 1 alpha subcomplex subunit 9, mitochondrial (402 aa).

The N-terminal 43 residues, 1 to 43, are a transit peptide targeting the mitochondrion; the sequence is MQVVSRRLVQRPLVGGASIYSSSSLRSLYGVSNHLNGTDNCRY.

This sequence belongs to the complex I NDUFA9 subunit family. Complex I is composed of at least 49 different subunits. This a component of the hydrophobic protein fraction. The cofactor is FAD.

Its subcellular location is the mitochondrion matrix. Its function is as follows. Accessory subunit of the mitochondrial membrane respiratory chain NADH dehydrogenase (Complex I), that is believed not to be involved in catalysis. Complex I functions in the transfer of electrons from NADH to the respiratory chain. The immediate electron acceptor for the enzyme is believed to be ubiquinone. In Arabidopsis thaliana (Mouse-ear cress), this protein is NADH dehydrogenase [ubiquinone] 1 alpha subcomplex subunit 9, mitochondrial.